The sequence spans 65 residues: Large ribosomal subunit protein bL35 (65 aa).

Basic residues-rich tracts occupy residues 1–18 (MPKMKTKSAAAKRFKRTA), 31–44 (HRFHGKTKKQRRQL), and 55–65 (VKRYKKMIPAK). Residues 1–65 (MPKMKTKSAA…KRYKKMIPAK (65 aa)) form a disordered region.

The protein belongs to the bacterial ribosomal protein bL35 family.

The protein is Large ribosomal subunit protein bL35 of Limosilactobacillus fermentum (strain NBRC 3956 / LMG 18251) (Lactobacillus fermentum).